A 264-amino-acid chain; its full sequence is uncharacterized protein (264 aa).

The first 22 residues, Met-1–Ala-22, serve as a signal peptide directing secretion. The helical transmembrane segment at Leu-227–Tyr-247 threads the bilayer.

It is found in the membrane. This is an uncharacterized protein from Bacillus subtilis (strain 168).